Here is a 90-residue protein sequence, read N- to C-terminus: uncharacterized protein (90 aa).

This is an uncharacterized protein from Clostridium acetobutylicum (strain ATCC 824 / DSM 792 / JCM 1419 / IAM 19013 / LMG 5710 / NBRC 13948 / NRRL B-527 / VKM B-1787 / 2291 / W).